A 421-amino-acid polypeptide reads, in one-letter code: D-aspartate ligase (421 aa).

The 203-residue stretch at 130 to 332 (YEVCEEYDLP…LARFVTEDRV (203 aa)) folds into the ATP-grasp domain. An ATP-binding site is contributed by 161-224 (PFEFPVALKP…QDFIPGDDSN (64 aa)). Positions 290, 304, and 306 each coordinate Mg(2+).

Mg(2+) is required as a cofactor.

The enzyme catalyses [beta-GlcNAc-(1-&gt;4)-Mur2Ac(oyl-L-Ala-gamma-D-Glu-L-Lys-D-Ala-D-Ala)](n) + n D-aspartate + n ATP = [beta-GlcNAc-(1-&gt;4)-Mur2Ac(oyl-L-Ala-gamma-D-Glu-6-N-(beta-D-Asp)-L-Lys-D-Ala-D-Ala)]n + n ADP + n phosphate + n H(+). The protein operates within cell wall biogenesis; peptidoglycan biosynthesis. Its function is as follows. Catalyzes the addition of D-aspartate onto the lysine residue in the peptidoglycan precursor UDP-MurNAc-pentapeptide. The ligation occurs between the beta-carboxylate of D-Asp and the epsilon-amino group of L-Lys. Is highly specific for D-aspartate, as L-aspartate, D-glutamate, D-alanine, D-iso-asparagine and D-malate are not substrates. In Enterococcus faecium (strain Aus0004), this protein is D-aspartate ligase.